Consider the following 284-residue polypeptide: 2-dehydro-3-deoxyphosphooctonate aldolase (284 aa).

Belongs to the KdsA family.

The protein localises to the cytoplasm. The enzyme catalyses D-arabinose 5-phosphate + phosphoenolpyruvate + H2O = 3-deoxy-alpha-D-manno-2-octulosonate-8-phosphate + phosphate. It participates in carbohydrate biosynthesis; 3-deoxy-D-manno-octulosonate biosynthesis; 3-deoxy-D-manno-octulosonate from D-ribulose 5-phosphate: step 2/3. Its pathway is bacterial outer membrane biogenesis; lipopolysaccharide biosynthesis. The protein is 2-dehydro-3-deoxyphosphooctonate aldolase of Sodalis glossinidius (strain morsitans).